The following is a 723-amino-acid chain: Catalase-peroxidase (723 aa).

The segment at residues 97–225 (WHAAGSYRVT…LAAVQMGLIY (129 aa)) is a cross-link (tryptophyl-tyrosyl-methioninium (Trp-Tyr) (with M-251)). Histidine 98 serves as the catalytic Proton acceptor. The segment at residues 225–251 (YVNPEGVNGKSDPLATAAQMRETFARM) is a cross-link (tryptophyl-tyrosyl-methioninium (Tyr-Met) (with W-97)). Histidine 266 contacts heme b.

This sequence belongs to the peroxidase family. Peroxidase/catalase subfamily. Homodimer or homotetramer. Requires heme b as cofactor. In terms of processing, formation of the three residue Trp-Tyr-Met cross-link is important for the catalase, but not the peroxidase activity of the enzyme.

The catalysed reaction is H2O2 + AH2 = A + 2 H2O. It catalyses the reaction 2 H2O2 = O2 + 2 H2O. Its function is as follows. Bifunctional enzyme with both catalase and broad-spectrum peroxidase activity. Involved in tumorigenesis. The polypeptide is Catalase-peroxidase (Rhizobium radiobacter (Agrobacterium tumefaciens)).